The sequence spans 648 residues: MFRSCVPKAITSSRCFARMYSKDVRFGSGVRAMMIRGVDILADAVAVTMGPKGRSVIVERPWTSPKITKDGFTVARSIALKDQHMNLGAKLVQDVADNTNESAGDGTTTATVLARAIAKEGFNQITMGANPVEIRRGVMLAVDVVKDKLKEMSKAVETREEIQQVATLSANGDTEIGRLIGEATDKVGPRGTITVKDGKRLKDELNIIQGLRFDNGYVSPFFVNSSKGSKVEFANALVMISLKKITGLSQIVKGLEQSLRQRRPLIIIAEDISGEALNALVLNKLRLGLQVCAVKSPSYGHHRKELIGDISAATGATIFGDDINYSKMEEAKLEDLGQVGEAVISKDSTMLLQGKPKTGLLEMRIQQIQDELAEKQIKPEQRDRLRQRLSALTKGVAVLHIGGGSEVEVNEKKDRVVDALNATRAAIEEGIVPGGGTAFLRCIPYLQELKTESADLQKGVDIVCNALRMPCQTIAQNAGVDGPMVVAKVLNGSEDYGYDAMGDEYCRLVEKGIIDPTKVLRTAITDAAGVASLLSTTEVVITDSRNDDLLSKLSGAGGGMDDGLDMNMGGLEELAALSGLGGMGGMGGMGGMGGMGGMGGGFGGMGAGGGMSASASNDGPTAEEMNEMVKAIPGMEQVEVRDIDSGMM.

The N-terminal 55 residues, 1–55 (MFRSCVPKAITSSRCFARMYSKDVRFGSGVRAMMIRGVDILADAVAVTMGPKGRS), are a transit peptide targeting the mitochondrion.

The protein belongs to the chaperonin (HSP60) family.

Its subcellular location is the mitochondrion matrix. Prevents misfolding and promotes the refolding and proper assembly of unfolded polypeptides generated under stress conditions. The sequence is that of 60 kDa heat shock protein homolog 1, mitochondrial (Hsp60B) from Drosophila melanogaster (Fruit fly).